The primary structure comprises 447 residues: Tol-Pal system protein TolB (447 aa).

Positions 1–34 (MSSRLPALPLSRRQALLGGAGSAAALLLPGGAQA) are cleaved as a signal peptide. The tract at residues 426–447 (RNEQKVPTPGFASDPAWSPLLS) is disordered.

This sequence belongs to the TolB family. The Tol-Pal system is composed of five core proteins: the inner membrane proteins TolA, TolQ and TolR, the periplasmic protein TolB and the outer membrane protein Pal. They form a network linking the inner and outer membranes and the peptidoglycan layer.

It is found in the periplasm. Part of the Tol-Pal system, which plays a role in outer membrane invagination during cell division and is important for maintaining outer membrane integrity. In Rhodopseudomonas palustris (strain BisB18), this protein is Tol-Pal system protein TolB.